The chain runs to 127 residues: Holo-[acyl-carrier-protein] synthase (127 aa).

Mg(2+) contacts are provided by D7 and E56.

The protein belongs to the P-Pant transferase superfamily. AcpS family. Mg(2+) is required as a cofactor.

It is found in the cytoplasm. It carries out the reaction apo-[ACP] + CoA = holo-[ACP] + adenosine 3',5'-bisphosphate + H(+). Its function is as follows. Transfers the 4'-phosphopantetheine moiety from coenzyme A to a Ser of acyl-carrier-protein. This chain is Holo-[acyl-carrier-protein] synthase, found in Onion yellows phytoplasma (strain OY-M).